Reading from the N-terminus, the 166-residue chain is Regulatory protein RecX (166 aa).

This sequence belongs to the RecX family.

The protein resides in the cytoplasm. Its function is as follows. Modulates RecA activity. The polypeptide is Regulatory protein RecX (Salmonella arizonae (strain ATCC BAA-731 / CDC346-86 / RSK2980)).